The following is a 206-amino-acid chain: Large ribosomal subunit protein uL4 (206 aa).

Positions 51–96 (LTRAEVKHSTKKPFRQKGTGNARAGMTSTPNRRGGGRAFPNKPDEN) are disordered.

It belongs to the universal ribosomal protein uL4 family. In terms of assembly, part of the 50S ribosomal subunit.

One of the primary rRNA binding proteins, this protein initially binds near the 5'-end of the 23S rRNA. It is important during the early stages of 50S assembly. It makes multiple contacts with different domains of the 23S rRNA in the assembled 50S subunit and ribosome. Its function is as follows. Forms part of the polypeptide exit tunnel. This is Large ribosomal subunit protein uL4 from Chromobacterium violaceum (strain ATCC 12472 / DSM 30191 / JCM 1249 / CCUG 213 / NBRC 12614 / NCIMB 9131 / NCTC 9757 / MK).